The following is a 178-amino-acid chain: ATP synthase subunit delta (178 aa).

The protein belongs to the ATPase delta chain family. In terms of assembly, F-type ATPases have 2 components, F(1) - the catalytic core - and F(0) - the membrane proton channel. F(1) has five subunits: alpha(3), beta(3), gamma(1), delta(1), epsilon(1). F(0) has three main subunits: a(1), b(2) and c(10-14). The alpha and beta chains form an alternating ring which encloses part of the gamma chain. F(1) is attached to F(0) by a central stalk formed by the gamma and epsilon chains, while a peripheral stalk is formed by the delta and b chains.

The protein localises to the cell inner membrane. Its function is as follows. F(1)F(0) ATP synthase produces ATP from ADP in the presence of a proton or sodium gradient. F-type ATPases consist of two structural domains, F(1) containing the extramembraneous catalytic core and F(0) containing the membrane proton channel, linked together by a central stalk and a peripheral stalk. During catalysis, ATP synthesis in the catalytic domain of F(1) is coupled via a rotary mechanism of the central stalk subunits to proton translocation. This protein is part of the stalk that links CF(0) to CF(1). It either transmits conformational changes from CF(0) to CF(1) or is implicated in proton conduction. The protein is ATP synthase subunit delta of Nitrosococcus oceani (strain ATCC 19707 / BCRC 17464 / JCM 30415 / NCIMB 11848 / C-107).